The following is a 402-amino-acid chain: Caspase-1 (402 aa).

Residues 1–91 (MADKILRAKR…YLAGILELQS (91 aa)) enclose the CARD domain. The propeptide occupies 1–118 (MADKILRAKR…PSSSETKEEQ (118 aa)). The disordered stretch occupies residues 98–125 (FVATEDSKGGHPSSSETKEEQNKEDGTF). Over residues 113–123 (ETKEEQNKEDG) the composition is skewed to basic and acidic residues. Active-site residues include H236 and C284. A propeptide spanning residues 297–314 (SVRDSEEDFLTDAIFEDD) is cleaved from the precursor. A Phosphoserine modification is found at S301. R343 carries the post-translational modification Omega-N-methylarginine.

It belongs to the peptidase C14A family. Heterotetramer that consists of two anti-parallel arranged heterodimers, each one formed by a 20 kDa (Caspase-1 subunit p20) and a 10 kDa (Caspase-1 subunit p10) subunit. May be a component of the inflammasome, a protein complex which also includes PYCARD, CARD8 and NLRP2 and whose function would be the activation of pro-inflammatory caspases. Component of the AIM2 PANoptosome complex, a multiprotein complex that drives inflammatory cell death (PANoptosis). Both the p10 and p20 subunits interact with MEFV. Interacts with CARD17P/INCA and CARD18. Interacts with SERPINB1; this interaction regulates CASP1 activity. As to quaternary structure, heterotetramer that consists of two anti-parallel arranged heterodimers, each one formed by a 20 kDa (Caspase-1 subunit p20) and a 10 kDa (Caspase-1 subunit p10) subunit. Post-translationally, the two subunits are derived from the precursor sequence by an autocatalytic mechanism. In terms of processing, ubiquitinated via 'Lys-11'-linked polyubiquitination. Deubiquitinated by USP8. High level expression seen in spleen and lung, low level expression seen in brain, heart, liver, kidney, testis and skeletal muscle.

The protein localises to the cytoplasm. It localises to the cell membrane. It carries out the reaction Strict requirement for an Asp residue at position P1 and has a preferred cleavage sequence of Tyr-Val-Ala-Asp-|-.. Functionally, thiol protease involved in a variety of inflammatory processes by proteolytically cleaving other proteins, such as the precursors of the inflammatory cytokines interleukin-1 beta (IL1B) and interleukin 18 (IL18) as well as the pyroptosis inducer Gasdermin-D (GSDMD), into active mature peptides. Plays a key role in cell immunity as an inflammatory response initiator: once activated through formation of an inflammasome complex, it initiates a pro-inflammatory response through the cleavage of the two inflammatory cytokines IL1B and IL18, releasing the mature cytokines which are involved in a variety of inflammatory processes. Cleaves a tetrapeptide after an Asp residue at position P1. Also initiates pyroptosis, a programmed lytic cell death pathway, through cleavage of GSDMD. In contrast to cleavage of interleukin IL1B, recognition and cleavage of GSDMD is not strictly dependent on the consensus cleavage site but depends on an exosite interface on CASP1 that recognizes and binds the Gasdermin-D, C-terminal (GSDMD-CT) part. Cleaves and activates CASP7 in response to bacterial infection, promoting plasma membrane repair. Upon inflammasome activation, during DNA virus infection but not RNA virus challenge, controls antiviral immunity through the cleavage of CGAS, rendering it inactive. In apoptotic cells, cleaves SPHK2 which is released from cells and remains enzymatically active extracellularly. This is Caspase-1 (Casp1) from Mus musculus (Mouse).